Reading from the N-terminus, the 267-residue chain is Ribosyldihydronicotinamide dehydrogenase-like protein traD (267 aa).

FAD is bound by residues His9, 15 to 16, and 100 to 103; these read LN and LWWF. 122–124 contributes to the substrate binding site; sequence GHG. FAD is bound by residues 152 to 155 and Tyr160; that span reads TLGG.

The protein belongs to the NAD(P)H dehydrogenase (quinone) family. Homodimer. It depends on FAD as a cofactor.

It participates in secondary metabolite biosynthesis. In terms of biological role, ribosyldihydronicotinamide dehydrogenase-like protein; part of the tra gene cluster that produces terrestric acid. The clavatol biosynthesis cluster cla and the terrestric acid cluster tra are both involved in the production of peniphenones and penilactones. The non-reducing PKS claF is responsible for the formation of clavatol from successive condensations of 3 malonyl-CoA units, presumably with a simple acetyl-CoA starter unit, and 2 methylation steps. The esterase claE probably collaborates with claF by catalyzing the hydrolysis of ACP-bound acyl intermediates to free the ACP from stalled intermediates. The clavatol oxidase claD then converts clavatol to hydroxyclavatol. Spontaneous dehydration of hydroxyclavatol leads to the accumulation of the highly active ortho-quinone methide. On the other hand, the PKS-NRPS hybrid traA is involved in the formation of crustosic acid, with the help of traB and traD. The polyketide synthase module (PKS) of traA is responsible for the synthesis of the polyketide backbone via the condensation of an acetyl-CoA starter unit with 3 malonyl-CoA units. The downstream nonribosomal peptide synthetase (NRPS) module then amidates the carboxyl end of the polyketide with L-malic acid. Because traA lacks a designated enoylreductase (ER) domain, the required activity is provided the enoyl reductase traG. Crustosic acid undergoes decarboxylation and isomerization to the terrestric acid, catalyzed by the 2-oxoglutarate-dependent dioxygenase traH. Both acids are further converted to the 2 gamma-butyrolactones (R)-5-methyltetronic acid and (S)-5-carboxylmethyltetronic acid, with involvement of the cytochrome P450 monooxygenase claJ. Spontaneous addition of the methide to these gamma-butyrolactones leads to peniphenone D and penilactone D, which undergo again stereospecific attacking by methide to give penilactones A and B. This chain is Ribosyldihydronicotinamide dehydrogenase-like protein traD, found in Penicillium crustosum (Blue mold fungus).